A 356-amino-acid chain; its full sequence is Dual-specificity RNA methyltransferase RlmN (356 aa).

E89 acts as the Proton acceptor in catalysis. Positions 108–341 (SHARYTICVS…CTIRESKGLD (234 aa)) constitute a Radical SAM core domain. An intrachain disulfide couples C115 to C346. Residues C122, C126, and C129 each coordinate [4Fe-4S] cluster. Residues 172-173 (GE), S204, 227-229 (SLH), and N303 contribute to the S-adenosyl-L-methionine site. C346 functions as the S-methylcysteine intermediate in the catalytic mechanism.

The protein belongs to the radical SAM superfamily. RlmN family. [4Fe-4S] cluster serves as cofactor.

The protein resides in the cytoplasm. The enzyme catalyses adenosine(2503) in 23S rRNA + 2 reduced [2Fe-2S]-[ferredoxin] + 2 S-adenosyl-L-methionine = 2-methyladenosine(2503) in 23S rRNA + 5'-deoxyadenosine + L-methionine + 2 oxidized [2Fe-2S]-[ferredoxin] + S-adenosyl-L-homocysteine. It carries out the reaction adenosine(37) in tRNA + 2 reduced [2Fe-2S]-[ferredoxin] + 2 S-adenosyl-L-methionine = 2-methyladenosine(37) in tRNA + 5'-deoxyadenosine + L-methionine + 2 oxidized [2Fe-2S]-[ferredoxin] + S-adenosyl-L-homocysteine. In terms of biological role, specifically methylates position 2 of adenine 2503 in 23S rRNA and position 2 of adenine 37 in tRNAs. m2A2503 modification seems to play a crucial role in the proofreading step occurring at the peptidyl transferase center and thus would serve to optimize ribosomal fidelity. The chain is Dual-specificity RNA methyltransferase RlmN from Campylobacter jejuni (strain RM1221).